We begin with the raw amino-acid sequence, 157 residues long: MEFLMSKHEADAPHLLIVEARFYDDLADALLDGAKAALDEAGATYDVVTVPGALEIPATISFALDGADNGGTEYDGFVALGTVIRGETYHFDIVSNESCRALTDLSVEESIAIGNGILTVENEEQAWVHARREDKDKGGFAARAALTMIGLRKKFGA.

5-amino-6-(D-ribitylamino)uracil is bound by residues Phe22, 53 to 55 (ALE), and 82 to 84 (TVI). A (2S)-2-hydroxy-3-oxobutyl phosphate-binding site is contributed by 87 to 88 (ET). His90 (proton donor) is an active-site residue. Asn115 contributes to the 5-amino-6-(D-ribitylamino)uracil binding site. (2S)-2-hydroxy-3-oxobutyl phosphate is bound at residue His129.

The protein belongs to the DMRL synthase family. As to quaternary structure, homopentamer.

The catalysed reaction is (2S)-2-hydroxy-3-oxobutyl phosphate + 5-amino-6-(D-ribitylamino)uracil = 6,7-dimethyl-8-(1-D-ribityl)lumazine + phosphate + 2 H2O + H(+). The protein operates within cofactor biosynthesis; riboflavin biosynthesis; riboflavin from 2-hydroxy-3-oxobutyl phosphate and 5-amino-6-(D-ribitylamino)uracil: step 1/2. Catalyzes the formation of 6,7-dimethyl-8-ribityllumazine by condensation of 5-amino-6-(D-ribitylamino)uracil with 3,4-dihydroxy-2-butanone 4-phosphate. This is the penultimate step in the biosynthesis of riboflavin. This Brucella abortus (strain 2308) protein is 6,7-dimethyl-8-ribityllumazine synthase 1 (ribH1).